A 369-amino-acid polypeptide reads, in one-letter code: Deoxyhypusine synthase (369 aa).

NAD(+) contacts are provided by residues 105–109 (SNLIS), 131–133 (TAG), glutamate 137, and aspartate 238. 136–137 (EE) serves as a coordination point for spermidine. A spermidine-binding site is contributed by aspartate 243. Glycine 283 contributes to the NAD(+) binding site. Residue histidine 288 participates in spermidine binding. An NAD(+)-binding site is contributed by 308-309 (TA). Spermidine is bound by residues 314–316 (GSD) and 323–329 (EAVSWGK). Lysine 329 serves as the catalytic Nucleophile. Position 342 to 343 (342 to 343 (DA)) interacts with NAD(+).

Belongs to the deoxyhypusine synthase family. It depends on NAD(+) as a cofactor.

It carries out the reaction [eIF5A protein]-L-lysine + spermidine = [eIF5A protein]-deoxyhypusine + propane-1,3-diamine. It participates in protein modification; eIF5A hypusination. Catalyzes the NAD-dependent oxidative cleavage of spermidine and the subsequent transfer of the butylamine moiety of spermidine to the epsilon-amino group of a critical lysine residue of the eIF-5A precursor protein to form the intermediate deoxyhypusine residue. This is the first step of the post-translational modification of that lysine into an unusual amino acid residue named hypusine. Hypusination is unique to mature eIF-5A factor and is essential for its function. The chain is Deoxyhypusine synthase (Dhps) from Mus musculus (Mouse).